The chain runs to 477 residues: Glutamyl-tRNA reductase (477 aa).

Substrate is bound by residues 49 to 52, Ser-109, 114 to 116, and Gln-120; these read TCNR and EQQ. Cys-50 acts as the Nucleophile in catalysis. 189 to 194 contributes to the NADP(+) binding site; sequence GAGAMG.

The protein belongs to the glutamyl-tRNA reductase family. As to quaternary structure, homodimer.

The catalysed reaction is (S)-4-amino-5-oxopentanoate + tRNA(Glu) + NADP(+) = L-glutamyl-tRNA(Glu) + NADPH + H(+). It functions in the pathway porphyrin-containing compound metabolism; protoporphyrin-IX biosynthesis; 5-aminolevulinate from L-glutamyl-tRNA(Glu): step 1/2. Catalyzes the NADPH-dependent reduction of glutamyl-tRNA(Glu) to glutamate 1-semialdehyde (GSA). The polypeptide is Glutamyl-tRNA reductase (Nocardia farcinica (strain IFM 10152)).